The sequence spans 1707 residues: Mediator of DNA damage checkpoint protein 1 (1707 aa).

The segment at methionine 1–serine 23 is disordered. The tract at residues methionine 1–threonine 150 is interaction with CHEK2. The segment at glutamate 2 to threonine 222 is interaction with the MRN complex. At threonine 4 the chain carries Phosphothreonine. The span at tryptophan 9–glutamate 18 shows a compositional bias: acidic residues. Residues asparagine 54–arginine 105 enclose the FHA domain. Threonine 146 carries the phosphothreonine modification. The interval alanine 166–valine 328 is disordered. Residues serine 168 and serine 176 each carry the phosphoserine modification. The span at glycine 183–alanine 192 shows a compositional bias: polar residues. 2 positions are modified to phosphoserine: serine 198 and serine 220. A Phosphothreonine modification is found at threonine 222. Over residues alanine 252 to proline 263 the composition is skewed to polar residues. The segment covering threonine 264–glycine 278 has biased composition (basic and acidic residues). Serine 298 is modified (phosphoserine). The residue at position 300 (threonine 300) is a Phosphothreonine. Serine 313 carries the phosphoserine modification. Threonine 315 carries the phosphothreonine modification. A Phosphoserine modification is found at serine 360. At threonine 362 the chain carries Phosphothreonine. A compositionally biased stretch (basic and acidic residues) spans alanine 369–histidine 378. Residues alanine 369–serine 398 form a disordered region. Serine 385 is subject to Phosphoserine. Acidic residues predominate over residues aspartate 386 to valine 397. Residue threonine 387 is modified to Phosphothreonine. 5 positions are modified to phosphoserine: serine 398, serine 415, serine 425, serine 438, and serine 442. Disordered stretches follow at residues aspartate 417–histidine 497, proline 520–cysteine 642, leucine 679–glycine 699, and arginine 718–leucine 746. The span at serine 425–glycine 439 shows a compositional bias: polar residues. Threonine 444 is subject to Phosphothreonine. Residue serine 461 is modified to Phosphoserine. A Phosphothreonine modification is found at threonine 470. Phosphoserine is present on residues serine 492, serine 493, serine 591, serine 593, and serine 595. Residues valine 580–serine 595 show a composition bias toward polar residues. Residues glycine 626 to cysteine 642 are compositionally biased toward basic and acidic residues. The segment covering glutamate 719 to histidine 730 has biased composition (basic and acidic residues). Residues serine 735 and serine 750 each carry the phosphoserine modification. Lysine 769 carries the N6-acetyllysine modification. Composition is skewed to basic and acidic residues over residues alanine 778 to isoleucine 804, threonine 812 to glutamate 868, and threonine 875 to lysine 889. Disordered stretches follow at residues alanine 778–proline 899 and isoleucine 914–alanine 1510. Phosphoserine occurs at positions 885, 929, and 962. Over residues serine 968–leucine 986 the composition is skewed to low complexity. Position 991 is a phosphoserine (serine 991). Composition is skewed to polar residues over residues proline 1026–threonine 1056, glutamine 1068–threonine 1086, and glutamate 1101–threonine 1113. Threonine 1056 bears the Phosphothreonine mark. Serine 1104, serine 1126, and serine 1128 each carry phosphoserine. Phosphothreonine occurs at positions 1132, 1173, and 1234. 4 stretches are compositionally biased toward polar residues: residues proline 1225–alanine 1241, proline 1265–alanine 1281, valine 1295–lysine 1308, and leucine 1317–proline 1326. Threonine 1297 and threonine 1298 each carry phosphothreonine. Serine 1327 carries the phosphoserine modification. Over residues proline 1343–glutamine 1363 the composition is skewed to polar residues. A Phosphothreonine modification is found at threonine 1352. Serine 1359 is subject to Phosphoserine. Positions serine 1364 to proline 1376 are enriched in low complexity. At threonine 1375 the chain carries Phosphothreonine. Positions leucine 1378–isoleucine 1393 are enriched in pro residues. Lysine 1418 is covalently cross-linked (Glycyl lysine isopeptide (Lys-Gly) (interchain with G-Cter in SUMO2)). Over residues serine 1421–alanine 1441 the composition is skewed to low complexity. Phosphoserine is present on residues serine 1435, serine 1436, serine 1439, and serine 1443. A compositionally biased stretch (basic and acidic residues) spans valine 1459–proline 1473. Lysine 1461 participates in a covalent cross-link: Glycyl lysine isopeptide (Lys-Gly) (interchain with G-Cter in SUMO1); alternate. Lysine 1461 participates in a covalent cross-link: Glycyl lysine isopeptide (Lys-Gly) (interchain with G-Cter in SUMO2); alternate. Threonine 1480 is subject to Phosphothreonine. The span at proline 1481–threonine 1493 shows a compositional bias: basic and acidic residues. An N6-acetyllysine modification is found at lysine 1496. BRCT domains follow at residues alanine 1510–valine 1588 and arginine 1609–serine 1700.

As to quaternary structure, homodimer. Interacts with H2AX, which requires phosphorylation of H2AX on 'Ser-139'. Interacts with the MRN complex, composed of MRE11, RAD50, and NBN. Interacts with CHEK2, which requires ATM-mediated phosphorylation of 'Thr-68' within the FHA domain of CHEK2. Interacts constitutively with the BRCA1-BARD1 complex, SMC1A and TP53BP1. Interacts with ATM and FANCD2, and these interactions are reduced upon DNA damage. Also interacts with the PRKDC complex, composed of XRCC6/KU70, XRCC5/KU80 and PRKDC/XRCC7. This interaction may be required for PRKDC autophosphorylation, which is essential for DNA double strand break (DSB) repair. When phosphorylated by ATM, interacts with RNF8 (via FHA domain). Interacts with CEP164. When phosphorylated, interacts with APTX (via FHA-like domain). Interacts (when phosphorylated) with TOPBP1; promoting TOPBP1 localization to DNA damage sites during mitosis. Interacts (when phosphorylated) with NBN; promoting NBN and MRN complex localization to DNA damage sites. Post-translationally, phosphorylated upon exposure to ionizing radiation (IR), ultraviolet radiation (UV), and hydroxyurea (HU). Phosphorylation in response to IR requires ATM, NBN, and possibly CHEK2. Also phosphorylated during the G2/M phase of the cell cycle and during activation of the mitotic spindle checkpoint. Phosphorylation at Thr-4 by ATM stabilizes and enhances homodimerization via the FHA domain. Phosphorylated at Ser-168 and Ser-198 by CK2 in response to DNA damage during mitosis, promoting interaction with TOPBP1. Phosphorylated by CK2 in response to DNA damage, promoting interaction with NBN and recruitment of the MRN complex to DNA damage sites. In terms of processing, sumoylation at Lys-1461 by PIAS4 following DNA damage promotes ubiquitin-mediated degradation. Ubiquitinated by RNF4, leading to proteasomal degradation; undergoes 'Lys-48'-linked polyubiquitination.

It localises to the nucleus. The protein localises to the chromosome. Its function is as follows. Histone reader protein required for checkpoint-mediated cell cycle arrest in response to DNA damage within both the S phase and G2/M phases of the cell cycle. Specifically recognizes and binds histone H2AX phosphorylated at 'Ser-139', a marker of DNA damage, serving as a scaffold for the recruitment of DNA repair and signal transduction proteins to discrete foci of DNA damage sites. Also required for downstream events subsequent to the recruitment of these proteins. These include phosphorylation and activation of the ATM, CHEK1 and CHEK2 kinases, and stabilization of TP53/p53 and apoptosis. ATM and CHEK2 may also be activated independently by a parallel pathway mediated by TP53BP1. Required for chromosomal stability during mitosis by promoting recruitment of TOPBP1 to DNA double strand breaks (DSBs): TOPBP1 forms filamentous assemblies that bridge MDC1 and tether broken chromosomes during mitosis. Required for the repair of DSBs via homologous recombination by promoting recruitment of NBN component of the MRN complex to DSBs. This Mus musculus (Mouse) protein is Mediator of DNA damage checkpoint protein 1 (Mdc1).